Reading from the N-terminus, the 172-residue chain is Shikimate kinase (172 aa).

14–19 (GAGKST) lines the ATP pocket. S18 provides a ligand contact to Mg(2+). 3 residues coordinate substrate: D36, R60, and G82. R120 provides a ligand contact to ATP. Residue R139 coordinates substrate. Q156 contacts ATP.

It belongs to the shikimate kinase family. Monomer. Mg(2+) is required as a cofactor.

It is found in the cytoplasm. It catalyses the reaction shikimate + ATP = 3-phosphoshikimate + ADP + H(+). The protein operates within metabolic intermediate biosynthesis; chorismate biosynthesis; chorismate from D-erythrose 4-phosphate and phosphoenolpyruvate: step 5/7. Its function is as follows. Catalyzes the specific phosphorylation of the 3-hydroxyl group of shikimic acid using ATP as a cosubstrate. The chain is Shikimate kinase from Vibrio parahaemolyticus serotype O3:K6 (strain RIMD 2210633).